The primary structure comprises 205 residues: SREBP regulating gene protein (205 aa).

Residues 1-16 (MLNLAALLWRRLLRKR) are Cytoplasmic-facing. A helical membrane pass occupies residues 17 to 35 (WVLALVFGLSLVYFLSSTF). The Lumenal segment spans residues 36 to 205 (KQEERAVRDR…GESPPELFPA (170 aa)). N-linked (GlcNAc...) asparagine glycosylation is present at N67.

Belongs to the SPRING family. As to quaternary structure, interacts with SCAP. In terms of tissue distribution, ubiquitously expressed with a slightly higher expression in the liver and kidney.

Its subcellular location is the golgi apparatus membrane. Functionally, positively regulates hepatic SREBP signaling pathway by modulating the proper localization of SCAP (SREBP cleavage-activating protein) to the endoplasmic reticulum, thereby controlling the level of functional SCAP. Plays a crucial role during embryogenesis. In Mus musculus (Mouse), this protein is SREBP regulating gene protein (Spring1).